The primary structure comprises 328 residues: Mitotic checkpoint protein BUB3 (328 aa).

WD repeat units lie at residues S4–V44, N47–L84, D87–P125, C129–L164, and V170–P210. Position 179 is an N6-acetyllysine (K179). Phosphoserine is present on S211. K216 is covalently cross-linked (Glycyl lysine isopeptide (Lys-Gly) (interchain with G-Cter in ubiquitin)). 2 WD repeats span residues K217–P263 and K267–V316.

This sequence belongs to the WD repeat BUB3 family. Interacts with BUB1 and BUBR1. The BUB1/BUB3 complex interacts with MAD1L1. Interacts with ZNF207/BuGZ; leading to promote stability and kinetochore loading of BUB3. Post-translationally, poly-ADP-ribosylated by PARP1. In terms of processing, ubiquitinated by UBR5, promoting disassembly of the mitotic checkpoint complex from the APC/C complex.

The protein resides in the nucleus. It is found in the chromosome. Its subcellular location is the centromere. It localises to the kinetochore. Its function is as follows. Has a dual function in spindle-assembly checkpoint signaling and in promoting the establishment of correct kinetochore-microtubule (K-MT) attachments. Promotes the formation of stable end-on bipolar attachments. Necessary for kinetochore localization of BUB1. Regulates chromosome segregation during oocyte meiosis. The BUB1/BUB3 complex plays a role in the inhibition of anaphase-promoting complex or cyclosome (APC/C) when spindle-assembly checkpoint is activated and inhibits the ubiquitin ligase activity of APC/C by phosphorylating its activator CDC20. This complex can also phosphorylate MAD1L1. The polypeptide is Mitotic checkpoint protein BUB3 (BUB3) (Homo sapiens (Human)).